We begin with the raw amino-acid sequence, 62 residues long: UPF0434 protein Rpic_2808 (62 aa).

The protein belongs to the UPF0434 family.

The chain is UPF0434 protein Rpic_2808 from Ralstonia pickettii (strain 12J).